Here is an 884-residue protein sequence, read N- to C-terminus: DNA mismatch repair protein MutS (884 aa).

Position 601–608 (601–608 (GPNMSGKS)) interacts with ATP. The interval 826–845 (ESQLSFFGGEQSSKKQDKPL) is disordered.

Belongs to the DNA mismatch repair MutS family.

This protein is involved in the repair of mismatches in DNA. It is possible that it carries out the mismatch recognition step. This protein has a weak ATPase activity. In Bacillus cereus (strain ATCC 14579 / DSM 31 / CCUG 7414 / JCM 2152 / NBRC 15305 / NCIMB 9373 / NCTC 2599 / NRRL B-3711), this protein is DNA mismatch repair protein MutS.